The primary structure comprises 413 residues: Phosphopentomutase (413 aa).

The Mn(2+) site is built by aspartate 11, aspartate 306, histidine 311, aspartate 347, histidine 348, and histidine 359.

Belongs to the phosphopentomutase family. Requires Mn(2+) as cofactor.

The protein localises to the cytoplasm. It catalyses the reaction 2-deoxy-alpha-D-ribose 1-phosphate = 2-deoxy-D-ribose 5-phosphate. It carries out the reaction alpha-D-ribose 1-phosphate = D-ribose 5-phosphate. It functions in the pathway carbohydrate degradation; 2-deoxy-D-ribose 1-phosphate degradation; D-glyceraldehyde 3-phosphate and acetaldehyde from 2-deoxy-alpha-D-ribose 1-phosphate: step 1/2. Isomerase that catalyzes the conversion of deoxy-ribose 1-phosphate (dRib-1-P) and ribose 1-phosphate (Rib-1-P) to deoxy-ribose 5-phosphate (dRib-5-P) and ribose 5-phosphate (Rib-5-P), respectively. This Helicobacter pylori (strain J99 / ATCC 700824) (Campylobacter pylori J99) protein is Phosphopentomutase.